A 780-amino-acid chain; its full sequence is Striatin (780 aa).

A coiled-coil region spans residues 53–120; that stretch reads LHFLQHEWAR…QERAKYHKLK (68 aa). The interval 55 to 63 is caveolin-binding; that stretch reads FLQHEWARF. Positions 123 to 150 are disordered; sequence TELNQGDMKPPSYDSDEGNETEVQPQQN. A Phosphoserine modification is found at Ser137. The tract at residues 149–166 is calmodulin-binding; the sequence is QNSQLMWKQGRQLLRQYL. At Thr225 the chain carries Phosphothreonine. Phosphoserine occurs at positions 227, 229, 245, and 259. Disordered regions lie at residues 289–312, 334–353, and 364–392; these read DFLV…DWEK, EQYK…NRSK, and VDEL…ELSR. Positions 299-312 are enriched in basic and acidic residues; sequence NESRSAGDGTDWEK. Residues 338–351 are compositionally biased toward basic residues; sequence KERKGKKGVKRPNR. WD repeat units lie at residues 461–500, 514–553, 567–606, 662–701, 704–743, and 750–780; these read SHFD…PAKK, AHKG…VDPY, GHTD…PALS, SSSC…LIHS, AHLE…CIQE, and KFEE…KVFV.

Belongs to the WD repeat striatin family. In terms of assembly, part of the core of STRIPAK complexes composed of PP2A catalytic and scaffolding subunits, the striatins (PP2A regulatory subunits), the striatin-associated proteins MOB4, STRIP1 and STRIP2, PDCD10 and members of the STE20 kinases, such as STK24 and STK26. Interacts with CTTNBP2; this interaction may regulate dendritic spine distribution of STRN. Activation of glutamate receptors weakens the interaction with CTTNBP2. As to expression, mainly expressed in brain but is also expressed at low levels in various tissues such as kidney, spleen, skeletal muscle and lung.

Its subcellular location is the cytoplasm. The protein localises to the membrane. It localises to the cell projection. It is found in the dendritic spine. In terms of biological role, calmodulin-binding scaffolding protein which is the center of the striatin-interacting phosphatase and kinase (STRIPAK) complexes. STRIPAK complexes have critical roles in protein (de)phosphorylation and are regulators of multiple signaling pathways including Hippo, MAPK, nuclear receptor and cytoskeleton remodeling. Different types of STRIPAK complexes are involved in a variety of biological processes such as cell growth, differentiation, apoptosis, metabolism and immune regulation. The protein is Striatin (Strn) of Mus musculus (Mouse).